Consider the following 521-residue polypeptide: MSL complex subunit 3 (521 aa).

The 59-residue stretch at 13–71 folds into the Tudor-knot domain; it reads SGEKVLCFEPDPTKARVLYDAKIVDVIVGKDEKGRKIPEYLIHFNGWNRSWDRWAAEDH. Disordered stretches follow at residues 114 to 166 and 298 to 409; these read KGLP…TRRE and ATST…PSKE. Residues 139 to 149 are compositionally biased toward acidic residues; it reads KDEEISEESDI. Residues 150–166 are compositionally biased toward basic and acidic residues; the sequence is EEKTEVKEEPELQTRRE. Positions 168 to 517 constitute an MRG domain; the sequence is EERTITIEIP…CEAHYSTKNP (350 aa). The tract at residues 290–440 is required for the histone acetyltransferase activity of the MSL complex; sequence FFLPIKESAT…WKLVPDNYPP (151 aa). A phosphoserine mark is found at Ser-309 and Ser-311. The segment covering 316-329 has biased composition (low complexity); it reads NPSTPQSTESQPTT. Phosphoserine is present on residues Ser-367 and Ser-400. At Thr-405 the chain carries Phosphothreonine. Residues Ser-407 and Ser-411 each carry the phosphoserine modification.

In terms of assembly, component of the MSL histone acetyltransferase complex at least composed of the KAT8/MOF, MSL1/hampin, MSL2 and MSL3. Interacts (via the MRG domain) with MSL1 and KAT8/MOF. In terms of tissue distribution, expressed in many tissues including liver, pancreas, heart, lung, kidney, skeletal muscle, brain, and placenta, with highest expression in skeletal muscle and heart.

It localises to the nucleus. Non-catalytic component of the MSL histone acetyltransferase complex, a multiprotein complex that mediates the majority of histone H4 acetylation at 'Lys-16' (H4K16ac), an epigenetic mark that prevents chromatin compaction. The MSL complex is required for chromosome stability and genome integrity by maintaining homeostatic levels of H4K16ac. The MSL complex is also involved in gene dosage by promoting up-regulation of genes expressed by the X chromosome. X up-regulation is required to compensate for autosomal biallelic expression. The MSL complex also participates in gene dosage compensation by promoting expression of Tsix non-coding RNA. Acts as a histone reader that specifically recognizes and binds histone H4 monomethylated at 'Lys-20' (H4K20Me1) in a DNA-dependent manner and is proposed to be involved in chromosomal targeting of the MSL complex. May play a role X inactivation in females. The protein is MSL complex subunit 3 of Homo sapiens (Human).